Reading from the N-terminus, the 231-residue chain is AA9 family lytic polysaccharide monooxygenase F (231 aa).

The first 17 residues, 1 to 17 (MLPSISLLLAAALGTSA), serve as a signal peptide directing secretion. H18, D50, and H89 together coordinate Cu(2+). D50 serves as a coordination point for O2. Cystine bridges form between C59/C177 and C147/C231. H163 and Q172 together coordinate O2. Residue Y174 participates in Cu(2+) binding.

The protein belongs to the polysaccharide monooxygenase AA9 family. Requires Cu(2+) as cofactor.

It localises to the secreted. The catalysed reaction is [(1-&gt;4)-beta-D-glucosyl]n+m + reduced acceptor + O2 = 4-dehydro-beta-D-glucosyl-[(1-&gt;4)-beta-D-glucosyl]n-1 + [(1-&gt;4)-beta-D-glucosyl]m + acceptor + H2O.. Its function is as follows. Lytic polysaccharide monooxygenase (LPMO) that depolymerizes crystalline and amorphous polysaccharides via the oxidation of scissile alpha- or beta-(1-4)-glycosidic bonds, yielding C1 oxidation products. Catalysis by LPMOs requires the reduction of the active-site copper from Cu(II) to Cu(I) by a reducing agent and H(2)O(2) or O(2) as a cosubstrate. The chain is AA9 family lytic polysaccharide monooxygenase F (gh61-6) from Neurospora crassa (strain ATCC 24698 / 74-OR23-1A / CBS 708.71 / DSM 1257 / FGSC 987).